The sequence spans 1000 residues: C2 domain-containing protein 5 (1000 aa).

Residues 1–109 (MPGKLKVKIV…EAATVISGWF (109 aa)) enclose the C2 domain. Ca(2+)-binding residues include Asp19, Asp26, Asp76, Asp78, Ser81, and Asp84. Phosphoserine; by PKB/AKT2 is present on Ser197. Phosphoserine is present on residues Ser200 and Ser260. Residues 265–330 (MKEIPFNEDP…SGSAGKEGGP (66 aa)) are disordered. Positions 274-289 (PNPNTHSSGPSTPLKN) are enriched in polar residues. Over residues 290-318 (QTYSFSPSKSYSRQSSSSDTDLSLTPKTG) the composition is skewed to low complexity. Ser293, Ser295, Ser304, Ser305, and Ser306 each carry phosphoserine. At Thr317 the chain carries Phosphothreonine. A compositionally biased stretch (gly residues) spans 319–328 (MGSGSAGKEG). Ser323 carries the post-translational modification Phosphoserine. Thr601 is modified (phosphothreonine). The interval 639 to 669 (EIIGSPIPEPRQRSRLLRSQSESSDEVTELD) is disordered. Ser643, Ser657, Ser659, Ser661, and Ser662 each carry phosphoserine. Phosphothreonine is present on Thr666. Ser671 is modified (phosphoserine). Phosphothreonine is present on Thr807. Phosphoserine is present on residues Ser817 and Ser852.

It depends on Ca(2+) as a cofactor. Phosphorylated on Ser-197 by active myristoylated kinase AKT2; insulin-stimulated phosphorylation by AKT2 regulates SLC2A4/GLUT4 translocation into the plasma membrane.

The protein resides in the cytoplasmic vesicle membrane. It is found in the cytoplasm. It localises to the cell cortex. The protein localises to the cell membrane. Its subcellular location is the cell projection. The protein resides in the ruffle. Required for insulin-stimulated glucose transport and glucose transporter SLC2A4/GLUT4 translocation from intracellular glucose storage vesicle (GSV) to the plasma membrane (PM) in adipocytes. Binds phospholipid membranes in a calcium-dependent manner and is necessary for the optimal membrane fusion between SLC2A4/GLUT4 GSV and the PM. This chain is C2 domain-containing protein 5 (C2CD5), found in Pongo abelii (Sumatran orangutan).